Reading from the N-terminus, the 314-residue chain is L-lactate dehydrogenase 2 (314 aa).

Residues Val-16, Asp-37, Lys-42, Tyr-68, and 82–83 (GL) each bind NAD(+). Substrate contacts are provided by residues Gln-85, Arg-91, and 123–126 (NPVD). NAD(+)-binding positions include 121–123 (ATN) and Ser-146. 151–154 (DSAR) lines the substrate pocket. Positions 156 and 171 each coordinate beta-D-fructose 1,6-bisphosphate. His-178 serves as the catalytic Proton acceptor. At Tyr-223 the chain carries Phosphotyrosine. A substrate-binding site is contributed by Thr-232.

Belongs to the LDH/MDH superfamily. LDH family. Homotetramer.

The protein localises to the cytoplasm. The catalysed reaction is (S)-lactate + NAD(+) = pyruvate + NADH + H(+). The protein operates within fermentation; pyruvate fermentation to lactate; (S)-lactate from pyruvate: step 1/1. Allosterically activated by fructose 1,6-bisphosphate (FBP). Functionally, catalyzes the conversion of lactate to pyruvate. This is L-lactate dehydrogenase 2 from Bacillus anthracis.